The chain runs to 134 residues: Interleukin-5 (134 aa).

Residues Met-1–Ala-19 form the signal peptide. The O-linked (GalNAc...) threonine glycan is linked to Thr-22. Asn-47 and Asn-90 each carry an N-linked (GlcNAc...) asparagine glycan.

Belongs to the IL-5 family. In terms of assembly, homodimer; disulfide-linked. Interacts with IL5RA. Interacts with CSF2RB.

It is found in the secreted. Its function is as follows. Homodimeric cytokine expressed predominantly by T-lymphocytes and NK cells that plays an important role in the survival, differentiation, and chemotaxis of eosinophils. Also acts on activated and resting B-cells to induce immunoglobulin production, growth, and differentiation. Mechanistically, exerts its biological effects through a receptor composed of IL5RA subunit and the cytokine receptor common subunit beta/CSF2RB. Binding to the receptor leads to activation of various kinases including LYN, SYK and JAK2 and thereby propagates signals through the RAS-MAPK and JAK-STAT5 pathways respectively. The polypeptide is Interleukin-5 (IL5) (Cercocebus atys (Sooty mangabey)).